Consider the following 188-residue polypeptide: Elongation factor P (188 aa).

It belongs to the elongation factor P family.

The protein localises to the cytoplasm. It functions in the pathway protein biosynthesis; polypeptide chain elongation. In terms of biological role, involved in peptide bond synthesis. Stimulates efficient translation and peptide-bond synthesis on native or reconstituted 70S ribosomes in vitro. Probably functions indirectly by altering the affinity of the ribosome for aminoacyl-tRNA, thus increasing their reactivity as acceptors for peptidyl transferase. The chain is Elongation factor P from Rhodopseudomonas palustris (strain BisB5).